Reading from the N-terminus, the 394-residue chain is GDP-mannose transporter (394 aa).

At 1–55 the chain is on the cytoplasmic side; the sequence is MADKKNEDFVVRMPDNGTVEKEPFLARSPPARARTGSGGGFGDSFSLARVANNPP. A helical membrane pass occupies residues 56-76; it reads AAILAYCLSSISMTVVNKYVV. At 77–80 the chain is on the lumenal side; the sequence is SGSE. Residues 81–101 traverse the membrane as a helical segment; the sequence is WNLNFFYLAVQAIVCIIAILF. The Cytoplasmic portion of the chain corresponds to 102–121; that stretch reads CKQIGIITNLAPFDNVKAKK. A helical transmembrane segment spans residues 122 to 144; it reads WFPVSLLLVGMIYTSTKALQFLS. Topologically, residues 145–149 are lumenal; sequence VPVYT. Residues 150–167 traverse the membrane as a helical segment; it reads IFKNLTIIAIAYGEVLWF. The Cytoplasmic segment spans residues 168–173; it reads GGSVSP. Residues 174-198 traverse the membrane as a helical segment; sequence LALVSFGLMVLSSVVAAWADIQSAI. The Lumenal segment spans residues 199 to 213; it reads HGGSHPSEASTAIST. A helical transmembrane segment spans residues 214-234; sequence LNAGYAWMGMNVFCSAAYLLG. Topologically, residues 235-246 are cytoplasmic; sequence MRKVIHKMNFKD. Residues 247-267 traverse the membrane as a helical segment; sequence WDSMFYNNLLTIPVLIVCSLI. The Lumenal segment spans residues 268-287; the sequence is AEDWSAANLARNFPIESRNA. A helical membrane pass occupies residues 288–308; sequence LFIGMIYSGLGAIFISYCSAW. Over 309-316 the chain is Cytoplasmic; it reads CIRVTTST. The helical transmembrane segment at 317–339 threads the bilayer; it reads TYSMVGALNKLPIAISGLVFFSA. Residues 340–342 are Lumenal-facing; the sequence is PVT. A helical transmembrane segment spans residues 343–362; that stretch reads FGSVSAIVIGFISGIVYAWA. At 363–394 the chain is on the cytoplasmic side; that stretch reads KARQSSQAKSALPTQQPVMSASSQSNKDASNS. The tract at residues 371–394 is disordered; sequence KSALPTQQPVMSASSQSNKDASNS. The segment covering 374-394 has biased composition (polar residues); sequence LPTQQPVMSASSQSNKDASNS.

It belongs to the TPT transporter family. SLC35D subfamily. Homooligomer.

Its subcellular location is the golgi apparatus membrane. It is found in the cytoplasmic vesicle membrane. The protein resides in the endoplasmic reticulum membrane. Functionally, involved in the import of GDP-mannose from the cytoplasm into the Golgi lumen. The polypeptide is GDP-mannose transporter (VRG4) (Pyricularia oryzae (strain 70-15 / ATCC MYA-4617 / FGSC 8958) (Rice blast fungus)).